A 323-amino-acid polypeptide reads, in one-letter code: o-succinylbenzoate synthase (323 aa).

Lys134 serves as the catalytic Proton donor. Mg(2+) is bound by residues Asp162, Glu191, and Asp214. Lys236 functions as the Proton acceptor in the catalytic mechanism.

It belongs to the mandelate racemase/muconate lactonizing enzyme family. MenC type 1 subfamily. The cofactor is a divalent metal cation.

The enzyme catalyses (1R,6R)-6-hydroxy-2-succinyl-cyclohexa-2,4-diene-1-carboxylate = 2-succinylbenzoate + H2O. It functions in the pathway quinol/quinone metabolism; 1,4-dihydroxy-2-naphthoate biosynthesis; 1,4-dihydroxy-2-naphthoate from chorismate: step 4/7. The protein operates within quinol/quinone metabolism; menaquinone biosynthesis. Its function is as follows. Converts 2-succinyl-6-hydroxy-2,4-cyclohexadiene-1-carboxylate (SHCHC) to 2-succinylbenzoate (OSB). The polypeptide is o-succinylbenzoate synthase (Edwardsiella ictaluri (strain 93-146)).